The sequence spans 91 residues: Potassium channel toxin AaTXK-beta (91 aa).

The N-terminal stretch at 1–19 (MQRNLVVLLFLGMVALSSC) is a signal peptide. Positions 20-27 (GLREKHVQ) are excised as a propeptide. A BetaSPN-type CS-alpha/beta domain is found at 54–91 (QFGCPAYQGYCDDHCQDIKKEEGFCHGFKCKCGIPMGF). 3 cysteine pairs are disulfide-bonded: Cys-57-Cys-78, Cys-64-Cys-83, and Cys-68-Cys-85.

This sequence belongs to the long chain scorpion toxin family. Class 1 subfamily. In terms of assembly, monomer (both chains). In terms of tissue distribution, expressed by the venom gland.

Its subcellular location is the secreted. Its function is as follows. Inhibits voltage-gated potassium channels (Kv). Does not activate Kv7 channels. Peptide activator of Kv7.4/KCNQ4 channels. Also acts as a subtype-selective activator of channels formed by Kv7.3/KCNQ3, Kv7.2/Kv7.3 (KCNQ2/KCNQ3), Kv7.5/Kv7.3 (KCNQ3/KCNQ5) subunits. This chain is Potassium channel toxin AaTXK-beta, found in Androctonus australis (Sahara scorpion).